A 432-amino-acid chain; its full sequence is Monooxygenase penA (432 aa).

Residues 7-29 form a helical membrane-spanning segment; it reads FKIAIIGAGPAGLTLASLLTASP. Asn-33 carries N-linked (GlcNAc...) asparagine glycosylation.

This sequence belongs to the aromatic-ring hydroxylase family. It depends on FAD as a cofactor.

The protein localises to the membrane. It participates in secondary metabolite biosynthesis. Its pathway is alkaloid biosynthesis. It functions in the pathway mycotoxin biosynthesis. Monooxygenase; part of the gene cluster that mediates the biosynthesis of penigequinolones, potent insecticidal alkaloids that contain a highly modified 10-carbon prenyl group. The first stage is catalyzed by the nonribosomal peptide synthetase penN that condenses anthranilic acid and O-methyl-L-tyrosine to produce 4'-methoxycyclopeptin. 4'-methoxycyclopeptin is then converted to 4'-methoxydehydrocyclopeptin by the ketoglutarate-dependent dioxygenase penM through dehydrogenation to form a double bond between C-alpha and C-beta of the O-methyltyrosine side chain. PenM also converts its first product methoxydehydrocyclopeptin to 4'-methoxycyclopenin. The following conversion of 4'methoxycyclopenin into 4'-methoxyviridicatin is catalyzed by the cyclopenase penL. 4'-methoxyviridicatin is the precursor of quinolone natural products, and is further converted to quinolinone B. The prenyltransferase penI then catalyzes the canonical Friedel-Crafts alkylation of quinolinone B with dimethylallyl cation to yield dimethylallyl quinolone, which is subjected to FAD-dependent dehydrogenation by the FAD-linked oxidoreductase penH to yield conjugated aryl diene. The delta(3') double bond then serves as the site of the second alkylation with DMAPP catalyzed by the prenyltransferase penG to yield a carbenium ion intermediate, which can be attacked by H(2)O to yield a styrenyl quinolone containing a C3'-hydroxyprenyl chain, or undergo cyclization to yield yaequinolones J1 and J2. The conversion of the styrenyl quinolone into the tetrahydrofuran-containing yaequinolone C is performed by the FAD-dependent monooxygenase penE and involves epoxidation of the terminal C7'-C8' olefin, followed by epoxide ring opening initiated by the C3' hydroxyl group. The predicted cysteine hydrolase penJ acts as an epoxide hydrolase that enhances the rate of the 5-exo-tet cyclization step, increasing the yield of yaequinolone C. PenF catalyzes the cationic rearrangement of the epoxide formed by penE (before ring opening to produce yaequinolone C) into yaequinolone D. Finally, the short-chain dehydrogenase/reductase (SDR)-like reductase penD, catalyzes both the dehydration of yaequinolone D and the reduction of the resulting oxonium to yield penigequinolone. This Penicillium thymicola protein is Monooxygenase penA.